Here is a 366-residue protein sequence, read N- to C-terminus: tRNA/tmRNA (uracil-C(5))-methyltransferase (366 aa).

S-adenosyl-L-methionine contacts are provided by Gln190, Tyr218, Asn223, Glu239, and Asp299. Catalysis depends on Cys324, which acts as the Nucleophile. Glu358 (proton acceptor) is an active-site residue.

Belongs to the class I-like SAM-binding methyltransferase superfamily. RNA M5U methyltransferase family. TrmA subfamily.

It carries out the reaction uridine(54) in tRNA + S-adenosyl-L-methionine = 5-methyluridine(54) in tRNA + S-adenosyl-L-homocysteine + H(+). The catalysed reaction is uridine(341) in tmRNA + S-adenosyl-L-methionine = 5-methyluridine(341) in tmRNA + S-adenosyl-L-homocysteine + H(+). In terms of biological role, dual-specificity methyltransferase that catalyzes the formation of 5-methyluridine at position 54 (m5U54) in all tRNAs, and that of position 341 (m5U341) in tmRNA (transfer-mRNA). The chain is tRNA/tmRNA (uracil-C(5))-methyltransferase from Escherichia coli O127:H6 (strain E2348/69 / EPEC).